A 216-amino-acid chain; its full sequence is 3-isopropylmalate dehydratase small subunit (216 aa).

It belongs to the LeuD family. LeuD type 1 subfamily. As to quaternary structure, heterodimer of LeuC and LeuD.

The enzyme catalyses (2R,3S)-3-isopropylmalate = (2S)-2-isopropylmalate. Its pathway is amino-acid biosynthesis; L-leucine biosynthesis; L-leucine from 3-methyl-2-oxobutanoate: step 2/4. Its function is as follows. Catalyzes the isomerization between 2-isopropylmalate and 3-isopropylmalate, via the formation of 2-isopropylmaleate. This Marinomonas sp. (strain MWYL1) protein is 3-isopropylmalate dehydratase small subunit.